Reading from the N-terminus, the 430-residue chain is Adenylosuccinate synthetase (430 aa).

GTP-binding positions include 13–19 and 41–43; these read GDEGKGK and GHT. Residue Asp-14 is the Proton acceptor of the active site. Residues Asp-14 and Gly-41 each contribute to the Mg(2+) site. Residues 14 to 17, 39 to 42, Thr-130, Arg-144, Gln-225, Thr-240, and Arg-304 each bind IMP; these read DEGK and NAGH. The Proton donor role is filled by His-42. A substrate-binding site is contributed by 300–306; that stretch reads ASTGRPR. GTP-binding positions include Arg-306, 332 to 334, and 414 to 416; these read KLD and STG.

Belongs to the adenylosuccinate synthetase family. Homodimer. It depends on Mg(2+) as a cofactor.

It localises to the cytoplasm. It catalyses the reaction IMP + L-aspartate + GTP = N(6)-(1,2-dicarboxyethyl)-AMP + GDP + phosphate + 2 H(+). It participates in purine metabolism; AMP biosynthesis via de novo pathway; AMP from IMP: step 1/2. In terms of biological role, plays an important role in the de novo pathway of purine nucleotide biosynthesis. Catalyzes the first committed step in the biosynthesis of AMP from IMP. The sequence is that of Adenylosuccinate synthetase from Xylella fastidiosa (strain M12).